We begin with the raw amino-acid sequence, 354 residues long: Uroporphyrinogen decarboxylase (354 aa).

Residues 27–31 (RQAGR), D77, Y154, S209, and H327 contribute to the substrate site.

The protein belongs to the uroporphyrinogen decarboxylase family. As to quaternary structure, homodimer.

Its subcellular location is the cytoplasm. The catalysed reaction is uroporphyrinogen III + 4 H(+) = coproporphyrinogen III + 4 CO2. Its pathway is porphyrin-containing compound metabolism; protoporphyrin-IX biosynthesis; coproporphyrinogen-III from 5-aminolevulinate: step 4/4. Functionally, catalyzes the decarboxylation of four acetate groups of uroporphyrinogen-III to yield coproporphyrinogen-III. This Pseudomonas syringae pv. syringae (strain B728a) protein is Uroporphyrinogen decarboxylase.